We begin with the raw amino-acid sequence, 123 residues long: MYNTYAIIVHVSKLRNSHLFANASAIPNLQAVIRKKLLDSMKSRQKDVASTLKVFLSEIEYANKSSKPVTTDLDVLRVLKKNIKKRKQAIEQFRKAERLDLAEKEESQIQTLRQFLPEHASNI.

This is an uncharacterized protein from Schizosaccharomyces pombe (strain 972 / ATCC 24843) (Fission yeast).